The following is a 464-amino-acid chain: V-type ATP synthase beta chain (464 aa).

This sequence belongs to the ATPase alpha/beta chains family.

Its function is as follows. Produces ATP from ADP in the presence of a proton gradient across the membrane. The V-type beta chain is a regulatory subunit. The polypeptide is V-type ATP synthase beta chain (Streptococcus sanguinis (strain SK36)).